We begin with the raw amino-acid sequence, 595 residues long: Quinoprotein alcohol dehydrogenase PedH (595 aa).

Positions 1-27 are cleaved as a signal peptide; it reads MTRSPRRPLFAVSLVLSAMLLAGAAHA. Position 87 (Gln87) interacts with pyrroloquinoline quinone. A disulfide bond links Cys131 and Cys132. Residues Arg137, Ser181, Gly197, and Gly198 each contribute to the pyrroloquinoline quinone site. Glu199 is a binding site for Pr(3+). Trp263 serves as a coordination point for pyrroloquinoline quinone. Pr(3+) is bound by residues Asn281, Asp323, and Asp325. The active-site Proton acceptor is Asp323. Pyrroloquinoline quinone-binding residues include Arg350, Asn417, Trp493, and Ala557.

The protein belongs to the bacterial PQQ dehydrogenase family. It depends on Pr(3+) as a cofactor. The cofactor is Nd(3+). La(3+) is required as a cofactor. Ce(3+) serves as cofactor. Requires Sm(3+) as cofactor. It depends on pyrroloquinoline quinone as a cofactor. In terms of processing, the disulfide ring formed between the two adjacent cysteine residues Cys-131 and Cys-132 is essential for efficient electron transfer at pH 7 from PedH to its natural electron acceptor cytochrome c550.

Its subcellular location is the periplasm. It catalyses the reaction a primary alcohol + 2 Fe(III)-[cytochrome c] = an aldehyde + 2 Fe(II)-[cytochrome c] + 2 H(+). The catalysed reaction is ethanol + 2 Fe(III)-[cytochrome c] = acetaldehyde + 2 Fe(II)-[cytochrome c] + 2 H(+). The enzyme catalyses butan-1-ol + 2 Fe(III)-[cytochrome c] = butanal + 2 Fe(II)-[cytochrome c] + 2 H(+). It carries out the reaction butan-2-ol + 2 Fe(III)-[cytochrome c] = butan-2-one + 2 Fe(II)-[cytochrome c] + 2 H(+). It catalyses the reaction 2-phenylethanol + 2 Fe(III)-[cytochrome c] = 2-phenylacetaldehyde + 2 Fe(II)-[cytochrome c] + 2 H(+). The catalysed reaction is octan-1-ol + 2 Fe(III)-[cytochrome c] = octanal + 2 Fe(II)-[cytochrome c] + 2 H(+). The enzyme catalyses hexan-1-ol + 2 Fe(III)-[cytochrome c] = hexanal + 2 Fe(II)-[cytochrome c] + 2 H(+). It carries out the reaction cinnamyl alcohol + 2 Fe(III)-[cytochrome c] = cinnamaldehyde + 2 Fe(II)-[cytochrome c] + 2 H(+). It catalyses the reaction farnesol + 2 Fe(III)-[cytochrome c] = farnesal + 2 Fe(II)-[cytochrome c] + 2 H(+). The catalysed reaction is an aldehyde + 2 Fe(III)-[cytochrome c] + H2O = a carboxylate + 2 Fe(II)-[cytochrome c] + 3 H(+). The enzyme catalyses acetaldehyde + 2 Fe(III)-[cytochrome c] + H2O = 2 Fe(II)-[cytochrome c] + acetate + 3 H(+). It carries out the reaction butanal + 2 Fe(III)-[cytochrome c] + H2O = butanoate + 2 Fe(II)-[cytochrome c] + 3 H(+). It catalyses the reaction hexanal + 2 Fe(III)-[cytochrome c] + H2O = hexanoate + 2 Fe(II)-[cytochrome c] + 3 H(+). The catalysed reaction is octanal + 2 Fe(III)-[cytochrome c] + H2O = octanoate + 2 Fe(II)-[cytochrome c] + 3 H(+). Its function is as follows. Alcohol dehydrogenase that catalyzes the oxidation of a range of substrates, including linear and aromatic primary and secondary alcohols, as well as aldehydes, but only in the presence of lanthanides, allowing bacterial growth with a variety of volatile organic compounds (VOCs) as carbon and energy sources. Is also involved in the transcriptional regulation of pedE and pedH, most likely acting as a lanthanide sensory module. Uses a specific inducible cytochrome c550, encoded by the adjacent gene in the locus, as electron acceptor. This Pseudomonas putida (strain ATCC 47054 / DSM 6125 / CFBP 8728 / NCIMB 11950 / KT2440) protein is Quinoprotein alcohol dehydrogenase PedH.